The chain runs to 286 residues: 3-amino-tetrahydro-pyrrolizinone reductase (286 aa).

Tyr-146 acts as the Proton acceptor in catalysis.

It belongs to the short-chain dehydrogenases/reductases (SDR) family.

The catalysed reaction is 3-amino-5,6,7,7a-tetrahydro-1H-pyrrolizin-1-one + AH2 = 3-amino-tetrahydro-1H-pyrrolizin-1-ol + A. Involved in the biosynthetic pathway of pyrrolizwilline, a pyrrolizidine alkaloid. Catalyzes the reduction of 3-amino-tetrahydro-pyrrolizinone to 3-amino-tetrahydro-pyrrolizinol. This is 3-amino-tetrahydro-pyrrolizinone reductase (xhpD) from Xenorhabdus hominickii.